The sequence spans 126 residues: Small ribosomal subunit protein uS11 (126 aa).

It belongs to the universal ribosomal protein uS11 family. In terms of assembly, part of the 30S ribosomal subunit. Interacts with proteins S7 and S18. Binds to IF-3.

Its function is as follows. Located on the platform of the 30S subunit, it bridges several disparate RNA helices of the 16S rRNA. Forms part of the Shine-Dalgarno cleft in the 70S ribosome. The chain is Small ribosomal subunit protein uS11 from Ehrlichia chaffeensis (strain ATCC CRL-10679 / Arkansas).